The following is a 172-amino-acid chain: S-ribosylhomocysteine lyase (172 aa).

Fe cation-binding residues include His-54, His-58, and Cys-128.

The protein belongs to the LuxS family. In terms of assembly, homodimer. Fe cation is required as a cofactor.

The enzyme catalyses S-(5-deoxy-D-ribos-5-yl)-L-homocysteine = (S)-4,5-dihydroxypentane-2,3-dione + L-homocysteine. Functionally, involved in the synthesis of autoinducer 2 (AI-2) which is secreted by bacteria and is used to communicate both the cell density and the metabolic potential of the environment. The regulation of gene expression in response to changes in cell density is called quorum sensing. Catalyzes the transformation of S-ribosylhomocysteine (RHC) to homocysteine (HC) and 4,5-dihydroxy-2,3-pentadione (DPD). This Aliivibrio fischeri (strain MJ11) (Vibrio fischeri) protein is S-ribosylhomocysteine lyase.